Here is a 250-residue protein sequence, read N- to C-terminus: Agamous-like MADS-box protein AGL8 homolog (250 aa).

In terms of domain architecture, MADS-box spans 3 to 57 (RGRVQLKRIENKINRQVTFSKRRSGLLKKAHEISVLCDAEVGLIVFSTKGKLFEY). The K-box domain maps to 88 to 178 (PGSWTLENAK…SKKVKEREKE (91 aa)). Disordered stretches follow at residues 162 to 191 (QEQNNQLSKKVKEREKEVEQQNQWDQQNHE) and 206 to 241 (PHLGEASQNTNVVDNGEVEGGNSSQXQGAANNTVMP). Basic and acidic residues predominate over residues 171-180 (KVKEREKEVE). Polar residues-rich tracts occupy residues 181-191 (QQNQWDQQNHE) and 226-240 (GNSSQXQGAANNTVM).

It is found in the nucleus. In terms of biological role, probable transcription factor. This is Agamous-like MADS-box protein AGL8 homolog (SCM1) from Solanum commersonii (Commerson's wild potato).